Reading from the N-terminus, the 427-residue chain is UPF0229 protein YeaH (427 aa).

A disordered region spans residues 87-110 (RIERSQGGGGGSGSGQGQASQDGE). Residues 92 to 102 (QGGGGGSGSGQ) show a composition bias toward gly residues.

This sequence belongs to the UPF0229 family.

In Escherichia coli O6:K15:H31 (strain 536 / UPEC), this protein is UPF0229 protein YeaH.